The following is a 626-amino-acid chain: Chaperone protein HtpG (626 aa).

The interval 1–329 is a; substrate-binding; sequence MSEETLSFQA…SSDLPLNVSR (329 aa). Residues 330 to 549 form a b region; the sequence is EMLQDDPRLR…EGAMSLHLQK (220 aa). The interval 550–626 is c; it reads LLRQANQGSE…LTEVMGKGLI (77 aa).

Belongs to the heat shock protein 90 family. Homodimer.

Its subcellular location is the cytoplasm. In terms of biological role, molecular chaperone. Has ATPase activity. The polypeptide is Chaperone protein HtpG (Rhodospirillum rubrum (strain ATCC 11170 / ATH 1.1.1 / DSM 467 / LMG 4362 / NCIMB 8255 / S1)).